Here is a 174-residue protein sequence, read N- to C-terminus: Shikimate kinase (174 aa).

15–20 contributes to the ATP binding site; sequence GTGKST. Ser-19 contacts Mg(2+). Positions 37, 61, and 82 each coordinate substrate. Arg-120 contributes to the ATP binding site. Arg-138 is a binding site for substrate.

Belongs to the shikimate kinase family. In terms of assembly, monomer. It depends on Mg(2+) as a cofactor.

It localises to the cytoplasm. It catalyses the reaction shikimate + ATP = 3-phosphoshikimate + ADP + H(+). The protein operates within metabolic intermediate biosynthesis; chorismate biosynthesis; chorismate from D-erythrose 4-phosphate and phosphoenolpyruvate: step 5/7. Catalyzes the specific phosphorylation of the 3-hydroxyl group of shikimic acid using ATP as a cosubstrate. This Staphylococcus aureus (strain MSSA476) protein is Shikimate kinase.